Reading from the N-terminus, the 51-residue chain is Large ribosomal subunit protein eL39 (51 aa).

It belongs to the eukaryotic ribosomal protein eL39 family.

The polypeptide is Large ribosomal subunit protein eL39 (Saccharolobus islandicus (strain Y.N.15.51 / Yellowstone #2) (Sulfolobus islandicus)).